Here is a 222-residue protein sequence, read N- to C-terminus: Adenylate kinase (222 aa).

10–15 contacts ATP; that stretch reads GAGKGT. Positions 30-59 are NMP; the sequence is STGDMLRAAVKAGTPLGIEAKKVMDAGGLV. Residues T31, R36, 57–59, 85–88, and Q92 each bind AMP; these read GLV and GFPR. The segment at 122–159 is LID; sequence GRRVHVASGRTYHVKYNPPKNEGQDDETGDPLIQRDDD. ATP is bound by residues R123 and 132–133; that span reads TY. The disordered stretch occupies residues 135-162; that stretch reads VKYNPPKNEGQDDETGDPLIQRDDDKEE. AMP-binding residues include R156 and R167. An ATP-binding site is contributed by G207.

It belongs to the adenylate kinase family. As to quaternary structure, monomer.

It is found in the cytoplasm. It catalyses the reaction AMP + ATP = 2 ADP. The protein operates within purine metabolism; AMP biosynthesis via salvage pathway; AMP from ADP: step 1/1. Catalyzes the reversible transfer of the terminal phosphate group between ATP and AMP. Plays an important role in cellular energy homeostasis and in adenine nucleotide metabolism. In Ralstonia nicotianae (strain ATCC BAA-1114 / GMI1000) (Ralstonia solanacearum), this protein is Adenylate kinase.